Reading from the N-terminus, the 409-residue chain is Epoxyqueuosine reductase (409 aa).

Residues 1–23 (MDRNPELAIADARPSQDGRAAPS) are disordered. Catalysis depends on Asp-178, which acts as the Proton donor. The 30-residue stretch at 232–261 (AAPETPGAHCGSCTRCLGACPTGAIVAPYR) folds into the 4Fe-4S ferredoxin-type domain. Residues Cys-241, Cys-244, Cys-247, Cys-251, Cys-267, Cys-294, Cys-297, and Cys-301 each contribute to the [4Fe-4S] cluster site.

The protein belongs to the QueG family. In terms of assembly, monomer. The cofactor is cob(II)alamin. [4Fe-4S] cluster is required as a cofactor.

It is found in the cytoplasm. It carries out the reaction epoxyqueuosine(34) in tRNA + AH2 = queuosine(34) in tRNA + A + H2O. Its pathway is tRNA modification; tRNA-queuosine biosynthesis. Functionally, catalyzes the conversion of epoxyqueuosine (oQ) to queuosine (Q), which is a hypermodified base found in the wobble positions of tRNA(Asp), tRNA(Asn), tRNA(His) and tRNA(Tyr). In Burkholderia pseudomallei (strain K96243), this protein is Epoxyqueuosine reductase.